A 467-amino-acid chain; its full sequence is Ribulose bisphosphate carboxylase large chain (467 aa).

Substrate contacts are provided by X106 and T156. Catalysis depends on K158, which acts as the Proton acceptor. K160 is a binding site for substrate. Mg(2+) contacts are provided by K184, D186, and E187. The residue at position 184 (K184) is an N6-carboxylysine. H276 serves as the catalytic Proton acceptor. Substrate-binding residues include R277, H309, and S361.

The protein belongs to the RuBisCO large chain family. Type I subfamily. As to quaternary structure, heterohexadecamer of 8 large chains and 8 small chains. Mg(2+) serves as cofactor.

It localises to the plastid. It is found in the chloroplast. The catalysed reaction is 2 (2R)-3-phosphoglycerate + 2 H(+) = D-ribulose 1,5-bisphosphate + CO2 + H2O. The enzyme catalyses D-ribulose 1,5-bisphosphate + O2 = 2-phosphoglycolate + (2R)-3-phosphoglycerate + 2 H(+). In terms of biological role, ruBisCO catalyzes two reactions: the carboxylation of D-ribulose 1,5-bisphosphate, the primary event in carbon dioxide fixation, as well as the oxidative fragmentation of the pentose substrate in the photorespiration process. Both reactions occur simultaneously and in competition at the same active site. The protein is Ribulose bisphosphate carboxylase large chain (rbcL) of Chondrus crispus (Carrageen Irish moss).